Reading from the N-terminus, the 70-residue chain is Small ribosomal subunit protein bS21 (70 aa).

It belongs to the bacterial ribosomal protein bS21 family.

The protein is Small ribosomal subunit protein bS21 of Polaromonas naphthalenivorans (strain CJ2).